Reading from the N-terminus, the 51-residue chain is Large ribosomal subunit protein eL39 (51 aa).

The protein belongs to the eukaryotic ribosomal protein eL39 family.

In Thermococcus sibiricus (strain DSM 12597 / MM 739), this protein is Large ribosomal subunit protein eL39.